The following is a 102-amino-acid chain: Redox- and pH-responsive transcriptional regulator WhiB3 (102 aa).

Positions 22-86 (LCRGMDSSMF…GGLSESERDL (65 aa)) constitute a 4Fe-4S Wbl-type domain. [4Fe-4S] cluster contacts are provided by Cys23, Cys53, Cys56, and Cys62.

The protein belongs to the WhiB family. Homodimer. Interacts with the C-terminal 54 residues of sigma factor SigA (RpoV). The cofactor is [4Fe-4S] cluster. In terms of processing, the 4Fe-4S cluster interacts with NO, forming a protein-bound dinitrosyliron dithiol complex. Post-translationally, the 4Fe-4S cluster interacts with O(2), leading to its degradation. Cluster loss takes about 2 hours. Once in the apo-form the cysteines oxidize to form 2 intramolecular disulfide bonds.

It localises to the cytoplasm. In terms of biological role, a redox-sensitive transcriptional regulator. Maintains intracellular redox homeostasis by regulating catabolic metabolism and polyketide biosynthesis. Regulates expression of the redox buffer ergothioneine (ERG) in a carbon-source-dependent manner; loss of ERG or mycothiol (MSH, the other major redox buffer in this bacteria) leads to respiratory alterations and bioenergetic deficiencies that negatively impact virulence. In response to low external pH (like that found in host macrophage phagosomes) alters endogenous gene expression leading to acid resistance; MSH and WhiB3 are probably part of a regulatory circuit that mediates gene expression upon acid stress. Regulates pathogenic lipid synthesis, coordinating proprionate flux (and other host-derived fatty acid oxidation intermediates) into methyl-branched fatty acids (polyacyltrehalose, phthiocerol dimycocerosates, sulfolipids) and the storage lipid triacylglycerol, functioning as reductive sink. During intracellular growth M.tuberculosis uses host fatty acids as an energy source, generating large quantities of proprionate and NADH/NADPH, which are toxic and highly reducing respectively. WhiB3 is thought to help dissipate proprionate and NADH/NADPH by switching to the in vivo carbon source and via lipid anabolism. Responds to NO and O(2). Regulates expression of genes encoding modular polyketide synthases such as pks2, pks3 and fbpA. The oxidized apo-form of WhiB3 binds DNA (with 2 intramolecular disulfide bonds); holo-WhiB3 (with the 4Fe-4S cluster) binds DNA considerably less well. Discriminates poorly between specific and non-specific DNA-binding. Plays a role in virulence and nutritional stress. In its apo-form can act as a protein disulfide reductase. Its function is as follows. May respond to mycothiol (MSH) redox potential (E-MSH) which decreases at pH 4.5 for up to 72 hours, indicative of cellular reductive stress; deletion of whiB3 leads to a lesser E-MSH at 72 hours, indicative of cellular oxidative stress. Probably via its effects on production of polyketide lipids, regulates host gene expression, leading to blockage of phagosome maturation. Equilibration of extra- and intracytoplasmic pH kills bacteria. This is Redox- and pH-responsive transcriptional regulator WhiB3 (whiB3) from Mycobacterium tuberculosis (strain ATCC 25618 / H37Rv).